We begin with the raw amino-acid sequence, 154 residues long: Probable chemoreceptor glutamine deamidase CheD (154 aa).

It belongs to the CheD family.

The catalysed reaction is L-glutaminyl-[protein] + H2O = L-glutamyl-[protein] + NH4(+). Its function is as follows. Probably deamidates glutamine residues to glutamate on methyl-accepting chemotaxis receptors (MCPs), playing an important role in chemotaxis. The chain is Probable chemoreceptor glutamine deamidase CheD from Methanococcus maripaludis (strain C6 / ATCC BAA-1332).